We begin with the raw amino-acid sequence, 184 residues long: Large ribosomal subunit protein uL10 (184 aa).

It belongs to the universal ribosomal protein uL10 family. In terms of assembly, part of the ribosomal stalk of the 50S ribosomal subunit. The N-terminus interacts with L11 and the large rRNA to form the base of the stalk. The C-terminus forms an elongated spine to which L12 dimers bind in a sequential fashion forming a multimeric L10(L12)X complex.

Its function is as follows. Forms part of the ribosomal stalk, playing a central role in the interaction of the ribosome with GTP-bound translation factors. This Gluconobacter oxydans (strain 621H) (Gluconobacter suboxydans) protein is Large ribosomal subunit protein uL10.